Reading from the N-terminus, the 177-residue chain is Peptide methionine sulfoxide reductase MsrA 2 (177 aa).

Cys12 is a catalytic residue.

The protein belongs to the MsrA Met sulfoxide reductase family.

It carries out the reaction L-methionyl-[protein] + [thioredoxin]-disulfide + H2O = L-methionyl-(S)-S-oxide-[protein] + [thioredoxin]-dithiol. The catalysed reaction is [thioredoxin]-disulfide + L-methionine + H2O = L-methionine (S)-S-oxide + [thioredoxin]-dithiol. Has an important function as a repair enzyme for proteins that have been inactivated by oxidation. Catalyzes the reversible oxidation-reduction of methionine sulfoxide in proteins to methionine. This is Peptide methionine sulfoxide reductase MsrA 2 from Staphylococcus aureus (strain MRSA252).